A 430-amino-acid polypeptide reads, in one-letter code: Enolase (430 aa).

Position 167 (Gln167) interacts with (2R)-2-phosphoglycerate. Catalysis depends on Glu209, which acts as the Proton donor. Mg(2+)-binding residues include Asp246, Glu287, and Asp314. Lys339, Arg368, Ser369, and Lys390 together coordinate (2R)-2-phosphoglycerate. The active-site Proton acceptor is the Lys339.

It belongs to the enolase family. It depends on Mg(2+) as a cofactor.

It is found in the cytoplasm. It localises to the secreted. The protein localises to the cell surface. The enzyme catalyses (2R)-2-phosphoglycerate = phosphoenolpyruvate + H2O. It participates in carbohydrate degradation; glycolysis; pyruvate from D-glyceraldehyde 3-phosphate: step 4/5. Functionally, catalyzes the reversible conversion of 2-phosphoglycerate (2-PG) into phosphoenolpyruvate (PEP). It is essential for the degradation of carbohydrates via glycolysis. This chain is Enolase, found in Prochlorococcus marinus (strain MIT 9215).